A 470-amino-acid chain; its full sequence is ATP synthase subunit beta (470 aa).

Position 155-162 (155-162 (GGAGVGKT)) interacts with ATP.

The protein belongs to the ATPase alpha/beta chains family. F-type ATPases have 2 components, CF(1) - the catalytic core - and CF(0) - the membrane proton channel. CF(1) has five subunits: alpha(3), beta(3), gamma(1), delta(1), epsilon(1). CF(0) has three main subunits: a(1), b(2) and c(9-12). The alpha and beta chains form an alternating ring which encloses part of the gamma chain. CF(1) is attached to CF(0) by a central stalk formed by the gamma and epsilon chains, while a peripheral stalk is formed by the delta and b chains.

The protein resides in the cell membrane. It carries out the reaction ATP + H2O + 4 H(+)(in) = ADP + phosphate + 5 H(+)(out). In terms of biological role, produces ATP from ADP in the presence of a proton gradient across the membrane. The catalytic sites are hosted primarily by the beta subunits. The polypeptide is ATP synthase subunit beta (Staphylococcus saprophyticus subsp. saprophyticus (strain ATCC 15305 / DSM 20229 / NCIMB 8711 / NCTC 7292 / S-41)).